The primary structure comprises 246 residues: Probable transcriptional regulatory protein YebC (246 aa).

The segment at 1–20 (MAGHSKWANTRHRKAAQDAK) is disordered.

Belongs to the TACO1 family.

Its subcellular location is the cytoplasm. The sequence is that of Probable transcriptional regulatory protein YebC from Shigella flexneri.